We begin with the raw amino-acid sequence, 122 residues long: Large ribosomal subunit protein bL19 (122 aa).

This sequence belongs to the bacterial ribosomal protein bL19 family.

In terms of biological role, this protein is located at the 30S-50S ribosomal subunit interface and may play a role in the structure and function of the aminoacyl-tRNA binding site. The protein is Large ribosomal subunit protein bL19 of Novosphingobium aromaticivorans (strain ATCC 700278 / DSM 12444 / CCUG 56034 / CIP 105152 / NBRC 16084 / F199).